The following is a 35-amino-acid chain: Putative neurotoxin (35 aa).

An LCN-type CS-alpha/beta domain is found at 1 to 35 (KEGYPKNSEGCKITCLFNDPYCKGLCINLSTQADY).

As to expression, expressed by the venom gland.

It localises to the secreted. Causes paralysis and death in insects (A.domestica). The protein is Putative neurotoxin of Rhopalurus junceus (Caribbean blue scorpion).